The chain runs to 431 residues: Enolase (431 aa).

Residue glutamine 163 coordinates (2R)-2-phosphoglycerate. The active-site Proton donor is the glutamate 205. Mg(2+) contacts are provided by aspartate 242, glutamate 288, and aspartate 315. Lysine 340, arginine 369, serine 370, and lysine 391 together coordinate (2R)-2-phosphoglycerate. The active-site Proton acceptor is lysine 340.

The protein belongs to the enolase family. Requires Mg(2+) as cofactor.

Its subcellular location is the cytoplasm. The protein localises to the secreted. It is found in the cell surface. It carries out the reaction (2R)-2-phosphoglycerate = phosphoenolpyruvate + H2O. It participates in carbohydrate degradation; glycolysis; pyruvate from D-glyceraldehyde 3-phosphate: step 4/5. In terms of biological role, catalyzes the reversible conversion of 2-phosphoglycerate (2-PG) into phosphoenolpyruvate (PEP). It is essential for the degradation of carbohydrates via glycolysis. The protein is Enolase of Bacillus anthracis (strain A0248).